The following is a 129-amino-acid chain: Cytochrome c oxidase subunit 13, mitochondrial (129 aa).

The transit peptide at 1-9 directs the protein to the mitochondrion; that stretch reads MFRQCAKRY. The Mitochondrial matrix segment spans residues 10–43; that stretch reads ASSLPPNALKPAFGPPDKVAAQKFKESLMATEKH. The chain crosses the membrane as a helical span at residues 44–71; the sequence is AKDTSNMWVKISVWVALPAIALTAVNTY. Topologically, residues 72-129 are mitochondrial intermembrane; that stretch reads FVEKEHAEHREHLKHVPDSEWPRDYEFMNIRSKPFFWGDGDKTLFWNPVVNRHIEHDD.

Belongs to the cytochrome c oxidase subunit 6A family. Component of the cytochrome c oxidase (complex IV, CIV), a multisubunit enzyme composed of 12 subunits. The complex is composed of a catalytic core of 3 subunits COX1, COX2 and COX3, encoded in the mitochondrial DNA, and 9 supernumerary subunits COX4, COX5A (or COX5B), COX6, COX7, COX8, COX9, COX12, COX13 and COX26, which are encoded in the nuclear genome. The complex exists as a monomer or a dimer and forms supercomplexes (SCs) in the inner mitochondrial membrane with a dimer of ubiquinol-cytochrome c oxidoreductase (cytochrome b-c1 complex, complex III, CIII), resulting in 2 different assemblies (supercomplexes III(2)IV and III(2)IV(2)). COX13 interacts with COX1 and COX3 on the intermembrane space (IMS) and COX4 on the matrix side.

The protein localises to the mitochondrion inner membrane. Its pathway is energy metabolism; oxidative phosphorylation. In terms of biological role, component of the cytochrome c oxidase, the last enzyme in the mitochondrial electron transport chain which drives oxidative phosphorylation. The respiratory chain contains 3 multisubunit complexes succinate dehydrogenase (complex II, CII), ubiquinol-cytochrome c oxidoreductase (cytochrome b-c1 complex, complex III, CIII) and cytochrome c oxidase (complex IV, CIV), that cooperate to transfer electrons derived from NADH and succinate to molecular oxygen, creating an electrochemical gradient over the inner membrane that drives transmembrane transport and the ATP synthase. Cytochrome c oxidase is the component of the respiratory chain that catalyzes the reduction of oxygen to water. Electrons originating from reduced cytochrome c in the intermembrane space (IMS) are transferred via the dinuclear copper A center (CU(A)) of COX2 and heme A of COX1 to the active site in COX1, a binuclear center (BNC) formed by heme A3 and copper B (CU(B)). The BNC reduces molecular oxygen to 2 water molecules using 4 electrons from cytochrome c in the IMS and 4 protons from the mitochondrial matrix. The chain is Cytochrome c oxidase subunit 13, mitochondrial (COX13) from Saccharomyces cerevisiae (strain ATCC 204508 / S288c) (Baker's yeast).